The sequence spans 632 residues: Palmitoyltransferase ZDHHC17 (632 aa).

Topologically, residues 1–304 (MQREEGFNTK…LKADKEFRQK (304 aa)) are cytoplasmic. The interval 11 to 305 (MADGPDEYET…KADKEFRQKV (295 aa)) is necessary and sufficient for interaction with DNAJC5 and SNAP25. 7 ANK repeats span residues 51–86 (THID…VRQP), 89–118 (ENVT…IVDQ), 123–152 (LNST…DPSL), 156–185 (EGCS…DVDM), 189–219 (NGMT…SVNL), 224–253 (HKNT…NVDA), and 257–286 (KGES…AKGY). Transmembrane regions (helical) follow at residues 305–325 (VMLG…DLDI) and 326–346 (DSWL…QFLS). Over 347-357 (KSFFDHSMHSA) the chain is Cytoplasmic. A helical membrane pass occupies residues 358-378 (LPLGIYLATKFWMYVTWFFWF). At 379–381 (WND) the chain is on the lumenal side. Residues 382–402 (LNFLFIHLPFLANSVALFYNF) traverse the membrane as a helical segment. Residues 403 to 480 (GKSWKSDPGI…GNCVGAGNHR (78 aa)) lie on the Cytoplasmic side of the membrane. One can recognise a DHHC domain in the interval 437–487 (IFCSTCLIRKPVRSKHCGVCNRCIAKFDHHCPWVGNCVGAGNHRYFMGYLF). C467 serves as the catalytic S-palmitoyl cysteine intermediate. Residues 481–501 (YFMGYLFFLLFMICWMIYGCV) traverse the membrane as a helical segment. At 502 to 529 (SYWGLHCETTYTKDGFWTYITQIATCSP) the chain is on the lumenal side. A helical transmembrane segment spans residues 530–550 (WMFWMFLNSVFHFLWVAVLLM). Residues 551 to 632 (CQLYQITCLG…QISGSGYQLV (82 aa)) lie on the Cytoplasmic side of the membrane.

It belongs to the DHHC palmitoyltransferase family. AKR/ZDHHC17 subfamily. As to quaternary structure, interacts (via ANK repeats) with numerous proteins (via the consensus sequence motif [VIAP]-[VIT]-x-x-Q-P). Interacts (via ANK repeats) with CLIP3. Interacts (via ANK repeats) with HTT. Interacts (via ANK repeats) with DNAJC5 (via C-terminus). Interacts (via ANK repeats) with MAP6. Interacts (via ANK repeats) with SNAP23. Interacts (via ANK repeats) with SNAP25. Interacts (via ANK repeats) with EVL. Interacts with SPRED1 and SPRED3. Interacts with GPM6A and OPTN. May interact (via ANK repeats) with SPRED2. May interact with NTRK1; may regulate its localization and function. Autopalmitoylated. Autopalmitoylation has a regulatory role in ZDHHC17-mediated Mg(2+) transport. As to expression, expressed in liver, testis, kidney, heart, pancreas and brain. Highest expression was seen in the brain. Localized predominantly in the perinuclear regions of neurons from the cortex, striatum and hippocampus. Colocalized with HTT in the medium spiny neurons of the striatum and the spiny neurons that project into the globus pallidus.

It is found in the golgi apparatus membrane. Its subcellular location is the cytoplasmic vesicle membrane. The protein localises to the presynaptic cell membrane. It catalyses the reaction L-cysteinyl-[protein] + hexadecanoyl-CoA = S-hexadecanoyl-L-cysteinyl-[protein] + CoA. The enzyme catalyses L-cysteinyl-[protein] + tetradecanoyl-CoA = S-tetradecanoyl-L-cysteinyl-[protein] + CoA. It carries out the reaction L-cysteinyl-[protein] + octadecanoyl-CoA = S-octadecanoyl-L-cysteinyl-[protein] + CoA. Functionally, palmitoyltransferase that catalyzes the addition of palmitate onto various protein substrates and is involved in a variety of cellular processes. Has no stringent fatty acid selectivity and in addition to palmitate can also transfer onto target proteins myristate from tetradecanoyl-CoA and stearate from octadecanoyl-CoA. Palmitoyltransferase specific for a subset of neuronal proteins, including SNAP25, DLG4/PSD95, GAD2, SYT1 and HTT. Also palmitoylates neuronal protein GPM6A as well as SPRED1 and SPRED3. Could also play a role in axonogenesis through the regulation of NTRK1 and the downstream ERK1/ERK2 signaling cascade. May be involved in the sorting or targeting of critical proteins involved in the initiating events of endocytosis at the plasma membrane. May play a role in Mg(2+) transport. Could also palmitoylate DNAJC5 and regulate its localization to the Golgi membrane. Palmitoylates CASP6, thereby preventing its dimerization and subsequent activation. The polypeptide is Palmitoyltransferase ZDHHC17 (Mus musculus (Mouse)).